A 449-amino-acid chain; its full sequence is Ribosomal protein uS12 methylthiotransferase RimO (449 aa).

Positions 5–116 (PTIAISHLGC…IVDVVQRVEN (112 aa)) constitute an MTTase N-terminal domain. [4Fe-4S] cluster is bound by residues cysteine 14, cysteine 50, cysteine 79, cysteine 154, cysteine 158, and cysteine 161. Residues 140–369 (TTTEGVAYLR…MEVQQPISIK (230 aa)) enclose the Radical SAM core domain. Residues 372-438 (QNCIGQTVPV…VYDLYGKTNL (67 aa)) form the TRAM domain.

This sequence belongs to the methylthiotransferase family. RimO subfamily. It depends on [4Fe-4S] cluster as a cofactor.

Its subcellular location is the cytoplasm. It catalyses the reaction L-aspartate(89)-[ribosomal protein uS12]-hydrogen + (sulfur carrier)-SH + AH2 + 2 S-adenosyl-L-methionine = 3-methylsulfanyl-L-aspartate(89)-[ribosomal protein uS12]-hydrogen + (sulfur carrier)-H + 5'-deoxyadenosine + L-methionine + A + S-adenosyl-L-homocysteine + 2 H(+). Its function is as follows. Catalyzes the methylthiolation of an aspartic acid residue of ribosomal protein uS12. In Rippkaea orientalis (strain PCC 8801 / RF-1) (Cyanothece sp. (strain PCC 8801)), this protein is Ribosomal protein uS12 methylthiotransferase RimO.